The primary structure comprises 389 residues: Jasmonate O-methyltransferase (389 aa).

Y18 lines the S-adenosyl-L-homocysteine pocket. Q25 is a jasmonate binding site. C60, N65, D97, L98, S142, and F143 together coordinate S-adenosyl-L-homocysteine. The jasmonate site is built by H163 and W164. Positions 186, 272, 274, and 275 each coordinate Mg(2+).

The protein belongs to the methyltransferase superfamily. Type-7 methyltransferase family. Mg(2+) is required as a cofactor. In terms of tissue distribution, expressed in rosettes, cauline leaves and developing flowers but not in young seedlings.

It is found in the cytoplasm. The protein localises to the nucleus. The catalysed reaction is jasmonate + S-adenosyl-L-methionine = methyl (-)-jasmonate + S-adenosyl-L-homocysteine. Its pathway is lipid metabolism; oxylipin biosynthesis. In terms of biological role, catalyzes the methylation of jasmonate into methyljasmonate, a plant volatile that acts as an important cellular regulator mediating diverse developmental processes and defense responses. This chain is Jasmonate O-methyltransferase, found in Arabidopsis thaliana (Mouse-ear cress).